Consider the following 190-residue polypeptide: Putative manganese efflux pump MntP (190 aa).

6 helical membrane passes run 6–26 (IWLL…TSGI), 36–56 (FFIM…IGWF), 61–81 (FSHL…AFWG), 108–128 (LAIA…FVGI), 138–158 (IVII…IGVF), and 169–189 (LWGG…HLFL).

Belongs to the MntP (TC 9.B.29) family.

It localises to the cell inner membrane. Its function is as follows. Probably functions as a manganese efflux pump. The protein is Putative manganese efflux pump MntP of Phocaeicola vulgatus (strain ATCC 8482 / DSM 1447 / JCM 5826 / CCUG 4940 / NBRC 14291 / NCTC 11154) (Bacteroides vulgatus).